A 282-amino-acid polypeptide reads, in one-letter code: L-allo-isoleucyltransferase (282 aa).

The Acyl-thioester intermediate role is filled by Cys105. An AB hydrolase-1 domain is found at 169–261 (HTQSTYTPSD…DGQHHDFVDG (93 aa)).

Belongs to the AB hydrolase superfamily.

It carries out the reaction holo-[CmaD peptidyl-carrier protein] + L-alloisoleucyl-[CmaA peptidyl-carrier protein] = L-alloisoleucyl-[CmaD peptidyl-carrier protein] + holo-[CmaA peptidyl-carrier protein]. Functionally, involved in the biosynthesis of the phytotoxin coronatine (COR). Catalyzes the transfer of the aminoacyl group covalently attached to the pantetheinyl arm of CmaA to the holo-pantetheinyl arm of CmaD. During the shuttling process, CmaE generates a covalent-aminoacyl-S-Cys enzyme intermediate by the action of its donor substrate L-aminoacyl-S-CmaA and delivers it to the sulfhydryl group attached to the phosphopantetheinyl arm on CmaD. In Pseudomonas savastanoi pv. glycinea (Pseudomonas syringae pv. glycinea), this protein is L-allo-isoleucyltransferase.